The primary structure comprises 881 residues: MTSTNEIRRSFLEYFGSNGHDVVPSAPLVPYNDPTLMFTNAGMVPFKNVFTGLETRAVPRATSSQKCVRAGGKHNDLDNVGYTARHHTFFEMLGNFSFGDYFKEQAITHAWTLLTREWGLPKDKLLATVYHTDDEAFELWKKIAGLPEDRIIRIATKDNFWAMGDDGPCGPCSEIFFDHGDHIWGGPPGSPDEDGDRFIEIWNLVFMQFEQTAGEITGSLPKPSIDTGMGLERIAAVLQGEHDNYDTDTFKALIAASESLTSVRAEGDHKASHRVIADHLRSTSFLLADGVLPSNEGRGYVLRRIMRRAMRHAHLLGAKDPLMHRLVPALVAEMGAAYPELGRAQPLIEETLLREEVQFRRTLSNGIKLLDEATATLGEGDKLPGDTAFKLYDTYGFPYDLTEDALRARGIAVDREGFDAAMAQQKAAARAAWKGSGQAADSEVWFDIAERVGATEFTGYTATTGEAQVVALVKDGKEVDSAMAGDDVAVIVNQTPFYGESGGQTGDAGTITGGDGLVLAVSDTAKPLGRLHAHNAKVQSGSVKVGDVVRLDIDVARRDAIRANHSATHLLHAALRHRLGAHVTQKGSLVAADRLRFDFSHPTALSAEDIAAIEAEVNAEIRANEVVTTRLMSPEDAIEAGAMALFGEKYGDEVRVLSMGRVADKHYSVELCGGTHVRALGDIGVFRIVSESAVSSGVRRIEALTGEGARQWFVAREDALKNTASILRTTPEDVEARVTALMDERKKLERELAEAKKALALGGGSAKAENADEDVNGVKFSGQVLEGLDPKDLRGLLDQAKQRLGSGVAVIVAVNEGKASIAAAVTDDLAGKVSAVDLVRAGVEALGGKGGGGRPDMAQGGGPEGSRAADAIAAARAVLTA.

Positions 565, 569, 672, and 676 each coordinate Zn(2+).

This sequence belongs to the class-II aminoacyl-tRNA synthetase family. It depends on Zn(2+) as a cofactor.

Its subcellular location is the cytoplasm. It carries out the reaction tRNA(Ala) + L-alanine + ATP = L-alanyl-tRNA(Ala) + AMP + diphosphate. Functionally, catalyzes the attachment of alanine to tRNA(Ala) in a two-step reaction: alanine is first activated by ATP to form Ala-AMP and then transferred to the acceptor end of tRNA(Ala). Also edits incorrectly charged Ser-tRNA(Ala) and Gly-tRNA(Ala) via its editing domain. The chain is Alanine--tRNA ligase from Novosphingobium aromaticivorans (strain ATCC 700278 / DSM 12444 / CCUG 56034 / CIP 105152 / NBRC 16084 / F199).